The following is a 1069-amino-acid chain: Epstein-Barr nuclear antigen 6 (1069 aa).

5 disordered regions span residues 1–75, 353–708, 733–776, 884–932, and 1008–1069; these read MESF…RIRR, MLAT…PCQS, SSMS…LYPG, REPR…PPRL, and PLDI…SELD. Residues 50 to 67 show a composition bias toward basic and acidic residues; that stretch reads PDSRDQQSRGQRRGDENR. Acidic residues-rich tracts occupy residues 381–391 and 507–524; these read VELESSDDELP and YDDDIIEVIDVETTEEET. Residues 543–561 are compositionally biased toward polar residues; sequence STGSAMSSSHTDPSVTQPS. Over residues 689–708 the composition is skewed to low complexity; that stretch reads QQEPSSQQQPATQSTPPCQS. The segment covering 742 to 751 has biased composition (basic and acidic residues); it reads SHEEQPRYED. Polar residues predominate over residues 1032–1048; that stretch reads SQATSEAQEILSDNSEI.

It belongs to the herpesviridae EBNA-6 family. In terms of assembly, interacts with host CTPB1; this interaction leads to gene repression, but also seems to interfere with the repressive function of CtBP pre-bound to DNA, leading to EBNA6 mediated up-regulation of many host genes. Interacts with host MYC; this interaction enhances MYC stability. Interacts (via N-terminus) with host RBPJ. Interacts (via N-terminus) with host histone H2AX; this interaction facilitates H2AX proteasomal degradation. Interacts with host TP73; this interaction inhibits TP73-mediated apoptotic pathway. Interacts (via N-terminus) with host PIM1; this interaction upregulates and stabilizes PIM1 and induces cell proliferation by inhibiting the growth suppressive properties of p21.

The protein localises to the host nucleus. It is found in the host nucleus matrix. Plays an essential role for the activation and immortalization of human B-cells. Represses transcription of viral promoters TP1 and Cp through interaction with host RBPJ, and inhibits EBNA2-mediated activation of these promoters. Targets host chromatin through interactions with host transcription factors, especially RBPJ and IRF4. Alternatively, EBNA6 also regulates the transcription of the EBV oncogene LMP1 in a cell cycle-dependent manner. Modulates the activity of several host proteins involved in cell cycle regulation including host cyclin A, MYC, RB, p21 and p27 mainly through binding to the host SCF(SKP2) complex. Inhibits the promoter of host H2AX and targets H2AX to proteasomal degradation in order to promote latency and cell proliferation. Upregulates host PIM1 expression and stabilization. Potentiates PIM1 to promote cell proliferation by inhibiting the growth suppressive properties of p21. This chain is Epstein-Barr nuclear antigen 6 (EBNA6), found in Epstein-Barr virus (strain AG876) (HHV-4).